The sequence spans 105 residues: Malonate decarboxylase acyl carrier protein (105 aa).

Serine 28 bears the O-(phosphoribosyl dephospho-coenzyme A)serine mark.

The protein belongs to the MdcC family. Post-translationally, covalently binds the prosthetic group of malonate decarboxylase.

The protein localises to the cytoplasm. Its function is as follows. Subunit of malonate decarboxylase, it is an acyl carrier protein to which acetyl and malonyl thioester residues are bound via a 2'-(5''-phosphoribosyl)-3'-dephospho-CoA prosthetic group and turn over during the catalytic mechanism. This is Malonate decarboxylase acyl carrier protein from Bradyrhizobium diazoefficiens (strain JCM 10833 / BCRC 13528 / IAM 13628 / NBRC 14792 / USDA 110).